The sequence spans 2958 residues: Protein CSF1 (2958 aa).

The Cytoplasmic portion of the chain corresponds to 1 to 17 (MEAISQLRGVPLTHQKD). The helical; Signal-anchor for type II membrane protein transmembrane segment at 18 to 38 (FSWVFLVDWILTVVVCLTMIF) threads the bilayer. The Extracellular portion of the chain corresponds to 39-2958 (YMGRIYAYLV…QYVKILDDTH (2920 aa)). Asn82, Asn117, Asn144, Asn271, Asn478, Asn530, Asn816, Asn821, Asn839, and Asn892 each carry an N-linked (GlcNAc...) asparagine glycan. The tract at residues 813 to 834 (GYQNSSLKNESEDKGPMKRSDL) is disordered. Positions 821–834 (NESEDKGPMKRSDL) are enriched in basic and acidic residues. The disordered stretch occupies residues 1175–1196 (MEPSRASFSEDDNDEEADPSSF). Acidic residues predominate over residues 1183-1192 (SEDDNDEEAD). 13 N-linked (GlcNAc...) asparagine glycosylation sites follow: Asn1309, Asn1368, Asn1453, Asn1785, Asn1921, Asn2130, Asn2146, Asn2280, Asn2337, Asn2520, Asn2578, Asn2719, and Asn2869.

It belongs to the CSF1 family. Interacts with MCD4; CSF1 channels phosphatidylethanolamine to MCD4 in the endoplasmic reticulum at contact sites to support GPI anchor biosynthesis.

The protein resides in the cell membrane. It localises to the endoplasmic reticulum membrane. It is found in the mitochondrion membrane. Its function is as follows. Tube-forming lipid transport protein which provides phosphatidylethanolamine for glycosylphosphatidylinositol (GPI) anchor synthesis in the endoplasmic reticulum. Required for the glucose and other nutrients uptake at low temperature. In Saccharomyces cerevisiae (strain ATCC 204508 / S288c) (Baker's yeast), this protein is Protein CSF1.